The chain runs to 299 residues: Cancer/testis antigen family 47 member B1 (299 aa).

Positions 1-10 (MSATGDRHPT) are enriched in basic and acidic residues. 2 disordered regions span residues 1-102 (MSAT…EGNE) and 215-299 (AREP…SKGT). Composition is skewed to low complexity over residues 20 to 31 (QEGAQAEAAGAG) and 46 to 60 (VPAA…PVEG). Positions 81 to 101 (AEEDSDIGPATEEEEEEEEGN) are enriched in acidic residues. The span at 215 to 238 (AREPAEEAADEKPPEEAAEEKLTE) shows a compositional bias: basic and acidic residues. 2 stretches are compositionally biased toward acidic residues: residues 239–251 (EATE…EPTS) and 268–281 (WDEE…EEEK). Residues 270–298 (EEAQDAAGEEEKEQEKEKDVENKVKNSKG) adopt a coiled-coil conformation. Residues 282–293 (EQEKEKDVENKV) are compositionally biased toward basic and acidic residues.

Belongs to the CT47 family.

This Homo sapiens (Human) protein is Cancer/testis antigen family 47 member B1.